Here is a 488-residue protein sequence, read N- to C-terminus: Aspartyl/glutamyl-tRNA(Asn/Gln) amidotransferase subunit B (488 aa).

It belongs to the GatB/GatE family. GatB subfamily. In terms of assembly, heterotrimer of A, B and C subunits.

The enzyme catalyses L-glutamyl-tRNA(Gln) + L-glutamine + ATP + H2O = L-glutaminyl-tRNA(Gln) + L-glutamate + ADP + phosphate + H(+). It carries out the reaction L-aspartyl-tRNA(Asn) + L-glutamine + ATP + H2O = L-asparaginyl-tRNA(Asn) + L-glutamate + ADP + phosphate + 2 H(+). In terms of biological role, allows the formation of correctly charged Asn-tRNA(Asn) or Gln-tRNA(Gln) through the transamidation of misacylated Asp-tRNA(Asn) or Glu-tRNA(Gln) in organisms which lack either or both of asparaginyl-tRNA or glutaminyl-tRNA synthetases. The reaction takes place in the presence of glutamine and ATP through an activated phospho-Asp-tRNA(Asn) or phospho-Glu-tRNA(Gln). This is Aspartyl/glutamyl-tRNA(Asn/Gln) amidotransferase subunit B from Ralstonia nicotianae (strain ATCC BAA-1114 / GMI1000) (Ralstonia solanacearum).